The following is a 25-amino-acid chain: Small ribosomal subunit protein eS32 (25 aa).

Positions 1-25 (MRAKWRKKRMRRLKRKRRKMRARSK) are disordered.

It belongs to the eukaryotic ribosomal protein eS32 family. As to quaternary structure, component of the small ribosomal subunit.

The chain is Small ribosomal subunit protein eS32 (RpL41) from Spodoptera frugiperda (Fall armyworm).